The sequence spans 160 residues: Endoribonuclease YbeY (160 aa).

3 residues coordinate Zn(2+): histidine 111, histidine 115, and histidine 121.

Belongs to the endoribonuclease YbeY family. Zn(2+) serves as cofactor.

It is found in the cytoplasm. Functionally, single strand-specific metallo-endoribonuclease involved in late-stage 70S ribosome quality control and in maturation of the 3' terminus of the 16S rRNA. This is Endoribonuclease YbeY from Stutzerimonas stutzeri (strain A1501) (Pseudomonas stutzeri).